The sequence spans 123 residues: Intracellular iron chaperone frataxin (123 aa).

Homodimer, upon Fe(2+) binding. Interacts with the SufS/SufU complex. Interacts with CpfC. Fe(2+) is required as a cofactor.

It is found in the cytoplasm. Its function is as follows. Plays an essential role in iron intracellular trafficking to iron cofactor biogenesis systems including iron-sulfur cluster (Fe-S) or heme assembly. Promotes the biosynthesis of iron-sulfur clusters by delivering Fe to the complex composed of the cysteine desulfurase SufS and the zinc-dependent sulfurtransferase SufU. Also plays a critical role in coproporphyrin-dependent heme b biogenesis and thus provides an essential function for the bacterial global metabolism. The chain is Intracellular iron chaperone frataxin (fra) from Bacillus subtilis (strain 168).